A 1523-amino-acid polypeptide reads, in one-letter code: Disco-interacting protein 2 homolog A (1523 aa).

One can recognise a DMAP1-binding domain in the interval 9 to 105 (EAAPLPAEVL…TSSASEDEGS (97 aa)). Residues 72–110 (KMPMPSKRRSALVHSSVETYTPPDTSSASEDEGSLRRPG) are disordered. The segment covering 87–99 (SVETYTPPDTSSA) has biased composition (polar residues). 2 positions are modified to phosphothreonine: Thr-92 and Thr-115. Positions 132-158 (QGSSTSSSASSTSSHPGGRPAAAPSAS) are disordered. Residues 134–158 (SSTSSSASSTSSHPGGRPAAAPSAS) are compositionally biased toward low complexity. 2 consecutive short sequence motifs (PXXP motif; required for interaction with CTTN) follow at residues 235–238 (PKRP) and 259–262 (PNQP).

It belongs to the DIP2 family. In terms of assembly, interacts with FSTL1; DIP2A may act as a cell surface receptor for FSTL1. Interacts (via N-terminus) with CTTN (via SH3 domain); the interaction promotes acetylation of CTTN and is required for proper synaptic transmission. Interacts with SHANK3. In terms of tissue distribution, detected in heart, liver, spleen, lung, kidney and brain with highest levels in brain (at protein level). In adult cortex, preferentially expressed in excitatory neurons. Broadly expressed in neuronal, reproductive and vascular tissues as well as in heart, kidney, liver and lung with expression detected in neurons, mesenchyme, endothelium, smooth muscle cells and cardiomyocytes. Expressed in ectoderm-derived tissues in the developing embryo. Expressed in the developing nervous system.

It localises to the cell membrane. The protein resides in the mitochondrion. The protein localises to the cell projection. It is found in the dendritic spine. It catalyses the reaction acetate + ATP + CoA = acetyl-CoA + AMP + diphosphate. Catalyzes the de novo synthesis of acetyl-CoA in vitro. Promotes acetylation of CTTN, possibly by providing the acetyl donor, ensuring correct dendritic spine morphology and synaptic transmission. Binds to follistatin-related protein FSTL1 and may act as a cell surface receptor for FSTL1, contributing to AKT activation and subsequent FSTL1-induced survival and function of endothelial cells and cardiac myocytes. This Mus musculus (Mouse) protein is Disco-interacting protein 2 homolog A (Dip2a).